A 1372-amino-acid polypeptide reads, in one-letter code: DNA-directed RNA polymerase subunit beta' (1372 aa).

The Zn(2+) site is built by Cys69, Cys71, Cys84, and Cys87. Asp460, Asp462, and Asp464 together coordinate Mg(2+). Zn(2+) contacts are provided by Cys808, Cys882, Cys889, and Cys892.

This sequence belongs to the RNA polymerase beta' chain family. The RNAP catalytic core consists of 2 alpha, 1 beta, 1 beta' and 1 omega subunit. When a sigma factor is associated with the core the holoenzyme is formed, which can initiate transcription. Mg(2+) is required as a cofactor. It depends on Zn(2+) as a cofactor.

It carries out the reaction RNA(n) + a ribonucleoside 5'-triphosphate = RNA(n+1) + diphosphate. DNA-dependent RNA polymerase catalyzes the transcription of DNA into RNA using the four ribonucleoside triphosphates as substrates. This chain is DNA-directed RNA polymerase subunit beta', found in Rickettsia prowazekii (strain Madrid E).